Reading from the N-terminus, the 110-residue chain is Iron-sulfur cluster assembly protein CyaY (110 aa).

Belongs to the frataxin family.

Functionally, involved in iron-sulfur (Fe-S) cluster assembly. May act as a regulator of Fe-S biogenesis. The sequence is that of Iron-sulfur cluster assembly protein CyaY from Pseudomonas syringae pv. syringae (strain B728a).